The primary structure comprises 520 residues: Pleckstrin homology domain-containing family O member 1-A (520 aa).

Disordered regions lie at residues 1-23 (MKKS…QPDK), 208-296 (SLDK…GHLQ), 313-439 (IQEQ…KSTD), and 497-520 (QARQ…QKSP). The PH domain occupies 20 to 131 (QPDKVGWIRR…WINVLNTAIT (112 aa)). The span at 227–241 (PASNTEAQEKTSSLP) shows a compositional bias: polar residues. 2 stretches are compositionally biased toward basic and acidic residues: residues 242 to 255 (RKSE…DHPR) and 333 to 347 (DSPR…DSPH). Positions 348–361 (SKGSSSPHSANSPS) are enriched in low complexity. Composition is skewed to basic and acidic residues over residues 363 to 385 (RAKD…DSPR) and 396 to 418 (KSID…DLTH). Residues 420-439 (KGSQSPLSTGSNSPHMKSTD) are compositionally biased toward polar residues. Residues 497–506 (QARQRREELS) show a composition bias toward basic and acidic residues. Polar residues predominate over residues 509–520 (GMASQKLQQKSP).

Post-translationally, C-terminal fragments could be released during apoptosis via caspase-3-dependent cleavage.

It localises to the membrane. The protein localises to the nucleus. Its subcellular location is the cytoplasm. Functionally, plays a role in the regulation of the actin cytoskeleton through its interactions with actin capping protein (CP). The sequence is that of Pleckstrin homology domain-containing family O member 1-A (plekho1a) from Danio rerio (Zebrafish).